The sequence spans 404 residues: Type I restriction enzyme EcoR124I/EcoR124II specificity subunit (404 aa).

Residues 1–153 (MSEMSYLEKL…PIPCPDNPEK (153 aa)) are target-recognition domain 1. The tract at residues 154–199 (SLAIQSEIVRILDKFTALTAELTAELNMRKKQYNYYRDQLLSFKEG) is conserved region 1. The interval 200-349 (EVEWKTLGEI…KLFSFKIPVP (150 aa)) is target-recognition domain 2. The tract at residues 350 to 404 (NINEQQRIVEILDKFDTLTNSITEGLPREIELRQKQYEYYRDLLFSFPKPETVSN) is conserved region 2.

It belongs to the type-I restriction system S methylase family. In terms of assembly, the type I restriction/modification system is composed of three polypeptides R, M and S; the restriction enzyme has stoichiometry R(2)M(2)S(1) while the methyltransferase is M(2)S(1). There is an equilibrium between R(2)M(2)S(1) and R(1)M(2)S(1); the latter is methylation and translocation proficient but restriction deficient. As to quaternary structure, (Microbial infection) Holoenenzyme interacts with Escherichia phage T7 protein Ocr; this interaction leads to the inhibition of the restriction activity, but may still allow methylation and translocation.

The specificity (S) subunit of a type I restriction enzyme; this subunit dictates DNA sequence specificity. The presence or absence of a 4-residue repeat changes the sequence specificity; a third copy of TAEL inserted at position 179-180 changes the recognition site from 5'-GAAN(6)RTCG-3' (for EcoR124I) to 5'-GAAN(7)RTCG-3' (for EcoR124II). The M and S subunits together form a methyltransferase (MTase) that methylates A-3 on the top and bottom strand of the sequence 5'-GAAN(7)RTCG-3'. In the presence of the R subunit the complex can also act as an endonuclease, binding to the same target sequence but cutting the DNA some distance from this site. Whether the DNA is cut or modified depends on the methylation state of the target sequence. When the target site is unmodified, the DNA is cut. When the target site is hemimethylated, the complex acts as a maintenance MTase modifying the DNA so that both strands become methylated. After locating a non-methylated recognition site, the enzyme complex serves as a molecular motor that translocates DNA in an ATP-dependent manner until a collision occurs that triggers cleavage. The R(1)M(2)S(1) complex translocates an average of 555 bp/second on nicked DNA; the R(2)M(2)S(1) complex translocates at double that speed. The 2 R subunit motors are independent and track along the helical pitch of the DNA, inducing positive supercoiling ahead of themselves. The polypeptide is Type I restriction enzyme EcoR124I/EcoR124II specificity subunit (hsdS) (Escherichia coli).